The primary structure comprises 459 residues: MMALGRAFAIVFCLIQAVSGESGNAQDGDLEDADADDHSFWCHSQLEVDGSQHLLTCAFNDSDINTANLEFQICGALLRVKCLTLNKLQDIYFIKTSEFLLIGSSNICVKLGQKNLTCKNMAINTIVKAEAPSDLKVVYRKEANDFLVTFNAPHLKKKYLKKVKHDVAYRPARGESNWTHVSLFHTRTTIPQRKLRPKAMYEIKVRSIPHNDYFKGFWSEWSPSSTFETPEPKNQGGWDPVLPSVTILSLFSVFLLVILAHVLWKKRIKPVVWPSLPDHKKTLEQLCKKPKTSLNVSFNPESFLDCQIHEVKGVEARDEVESFLPNDLPAQPEELETQGHRAAVHSANRSPETSVSPPETVRRESPLRCLARNLSTCNAPPLLSSRSPDYRDGDRNRPPVYQDLLPNSGNTNVPVPVPQPLPFQSGILIPVSQRQPISTSSVLNQEEAYVTMSSFYQNK.

Positions Met-1–Gly-20 are cleaved as a signal peptide. The Extracellular segment spans residues Glu-21–Asp-239. Cysteines 42 and 57 form a disulfide. N-linked (GlcNAc...) asparagine glycosylation occurs at Asn-60. Intrachain disulfides connect Cys-74-Cys-82 and Cys-108-Cys-118. 2 N-linked (GlcNAc...) asparagine glycosylation sites follow: Asn-115 and Asn-177. A Fibronectin type-III domain is found at Ala-131–Pro-232. A WSXWS motif motif is present at residues Trp-218–Ser-222. Residues Pro-240–Trp-264 form a helical membrane-spanning segment. The Cytoplasmic segment spans residues Lys-265–Lys-459. Residues Val-272–Lys-280 carry the Box 1 motif motif. A Phosphothreonine; by PKC modification is found at Thr-282. Disordered regions lie at residues Thr-337–Ser-365 and Asn-378–Val-413. The segment covering Ala-347 to Pro-357 has biased composition (polar residues). Over residues Pro-388 to Arg-397 the composition is skewed to basic and acidic residues.

It belongs to the type I cytokine receptor family. Type 4 subfamily. The IL7 receptor is a heterodimer of IL7R and IL2RG. The TSLP receptor is a heterodimer of CRLF2 and IL7R. Interacts with CD53. Post-translationally, N-glycosylated IL-7Ralpha binds IL7 300-fold more tightly than the unglycosylated form. In terms of processing, ubiquitinated by MARCHF8; leading to lysosomal degradation. As to expression, spleen, thymus and fetal liver.

The protein resides in the membrane. Functionally, receptor for interleukin-7. Also acts as a receptor for thymic stromal lymphopoietin (TSLP). This is Interleukin-7 receptor subunit alpha (Il7r) from Mus musculus (Mouse).